Here is a 356-residue protein sequence, read N- to C-terminus: Glycerol-1-phosphate dehydrogenase [NAD(P)+] (356 aa).

NAD(+) is bound by residues 103-107 and 125-128; these read GRSID and TAAS. Residue aspartate 130 participates in substrate binding. Position 134 (serine 134) interacts with NAD(+). Aspartate 177 lines the substrate pocket. Residues aspartate 177 and histidine 257 each contribute to the Zn(2+) site. Histidine 261 serves as a coordination point for substrate. A Zn(2+)-binding site is contributed by histidine 273.

Belongs to the glycerol-1-phosphate dehydrogenase family. The cofactor is Zn(2+).

Its subcellular location is the cytoplasm. It catalyses the reaction sn-glycerol 1-phosphate + NAD(+) = dihydroxyacetone phosphate + NADH + H(+). The catalysed reaction is sn-glycerol 1-phosphate + NADP(+) = dihydroxyacetone phosphate + NADPH + H(+). Its pathway is membrane lipid metabolism; glycerophospholipid metabolism. Functionally, catalyzes the NAD(P)H-dependent reduction of dihydroxyacetonephosphate (DHAP or glycerone phosphate) to glycerol 1-phosphate (G1P). The G1P thus generated is used as the glycerophosphate backbone of phospholipids in the cellular membranes of Archaea. This Methanosarcina acetivorans (strain ATCC 35395 / DSM 2834 / JCM 12185 / C2A) protein is Glycerol-1-phosphate dehydrogenase [NAD(P)+].